The sequence spans 728 residues: Hepatocyte growth factor (728 aa).

A signal peptide spans 1-32; sequence MMWGTKLLPVLLLQHVLLHLLLLPVTIPYAEG. At Q33 the chain carries Pyrrolidone carboxylic acid. Positions 38-124 constitute a PAN domain; that stretch reads NTLHEFKKSA…HEFDLYENKD (87 aa). Disulfide bonds link C71-C97, C75-C85, C129-C207, C150-C190, C178-C202, C212-C289, C233-C272, and C261-C284. 2 Kringle domains span residues 129–207 and 212–289; these read CIIG…IPQC and CMTC…IKMC. A glycan (N-linked (GlcNAc...) asparagine) is linked at N295. 11 disulfides stabilise this stretch: C306-C384, C327-C366, C355-C378, C392-C470, C413-C453, C441-C465, C488-C607, C520-C536, C615-C682, C645-C661, and C672-C700. 2 consecutive Kringle domains span residues 306–384 and 392–470; these read CIKG…IPKC and CYRG…ISRC. Residue N403 is glycosylated (N-linked (GlcNAc...) asparagine). One can recognise a Peptidase S1 domain in the interval 496–724; the sequence is VVNGIPTQTT…YAKWIHKVIL (229 aa). N569 and N656 each carry an N-linked (GlcNAc...) asparagine glycan.

Belongs to the peptidase S1 family. Plasminogen subfamily. Dimer of an alpha chain and a beta chain linked by a disulfide bond. Interacts with SRPX2; the interaction increases HGF mitogenic activity. In terms of processing, the single-chain precursor undergoes proteolytic processing by TMPRSS13 resulting in an active two-chain form. The single-chain precursor undergoes proteolytic processing by HGFAC resulting in an active two-chain form.

In terms of biological role, potent mitogen for mature parenchymal hepatocyte cells, seems to be a hepatotrophic factor, and acts as a growth factor for a broad spectrum of tissues and cell types. Activating ligand for the receptor tyrosine kinase MET by binding to it and promoting its dimerization. Activates MAPK signaling following TMPRSS13 cleavage and activation. The protein is Hepatocyte growth factor (Hgf) of Rattus norvegicus (Rat).